The sequence spans 656 residues: MSITKTYNGDPTSLVPTQSVKESLRLIEDLKFFLATAPANWQENQVIRRYYLNHDEGFVSCVYWNNLYFITGTDIVRCIVYKFEHFGRKIIDRKKFEEGIFSDLRNLKCGADAILEPPRSEFLEFLFKNSCLRTQKKQKVFFWFNVPHDKLMADALERDLKKEKMGQRPTTMAHREPALSFHYDESSSLYTQLGKHMETQKRINDAATSSTSNTATTLTDTGVSSGLNNTTSGGGSDSATSTHNNNEASTKPSNGSEKSSPEYTTTARGRDEFGFLNEATPSQYKANSDYEDDFPLDYINQTTQNSEDYITLDANYQAGSYANMIEDNYDSFLDATLFIPPSLGVPTGTAATATTSNQVAFNDEYLIEQAQPIRTPLPPISSSTISGLLQPKSAAKFFSLQSANGGEEFFPAYQNDPSTANAGFVPPISAKYATQFATRQVATPTYIKAIPQTGAAAATGNGGQPQQYYDQATGNAFYPAEIPVSYNVVHPESEYWTNNSGAVATTAAATAPMYDASGFPIPINQSYMVMNEHEMVPYQYMNSNGAMIGMIPPHQQQQQQQQQIAMGYQSMLRQQQQQQQQQQQQQPSSTMTKKKKQIHSFNNNKSLSSNGGGITKKSHDNNNHSKVKTSYGSLNDVVNSKVTKVINKEEVKQSQT.

The DNA-binding element occupies 44–154 (NQVIRRYYLN…NVPHDKLMAD (111 aa)). Residues 205-242 (DAATSSTSNTATTLTDTGVSSGLNNTTSGGGSDSATST) are compositionally biased toward low complexity. Disordered stretches follow at residues 205–289 (DAAT…ANSD) and 575–656 (QQQQ…QSQT). The span at 243–267 (HNNNEASTKPSNGSEKSSPEYTTTA) shows a compositional bias: polar residues. Low complexity-rich tracts occupy residues 575-586 (QQQQQQQQQQQQ) and 600-609 (SFNNNKSLSS). Over residues 628–642 (KTSYGSLNDVVNSKV) the composition is skewed to polar residues. A compositionally biased stretch (basic and acidic residues) spans 646 to 656 (INKEEVKQSQT).

It belongs to the STE12 transcription factor family.

The protein localises to the nucleus. Transcription factor involved in the formation of pseudohyphae and hyphae. It is likely to play a role in the developmental switch between yeast and mycelial forms. May be involved in a signal transduction system, strengthening the possibility of a sexual phase up to now undetected, and similar to that of the yeast mating pathway. In Candida albicans (strain SC5314 / ATCC MYA-2876) (Yeast), this protein is Transcription factor CPH1 (CPH1).